Here is an 89-residue protein sequence, read N- to C-terminus: Small ribosomal subunit protein uS14A (89 aa).

It belongs to the universal ribosomal protein uS14 family. Part of the 30S ribosomal subunit. Contacts proteins S3 and S10.

In terms of biological role, binds 16S rRNA, required for the assembly of 30S particles and may also be responsible for determining the conformation of the 16S rRNA at the A site. The sequence is that of Small ribosomal subunit protein uS14A from Listeria welshimeri serovar 6b (strain ATCC 35897 / DSM 20650 / CCUG 15529 / CIP 8149 / NCTC 11857 / SLCC 5334 / V8).